A 262-amino-acid polypeptide reads, in one-letter code: Adenosylcobinamide-GDP ribazoletransferase (262 aa).

8 consecutive transmembrane segments (helical) span residues 4-21 (AWSG…IPIR), 37-57 (AFPL…FIFS), 62-82 (LSPL…AGGL), 112-132 (VGAF…LFVF), 141-161 (IFLI…LLIY), 181-201 (YDAH…CAIH), 202-222 (FSVW…VFVA), and 236-256 (DALG…IWLL).

The protein belongs to the CobS family. Mg(2+) serves as cofactor.

Its subcellular location is the cell membrane. It catalyses the reaction alpha-ribazole + adenosylcob(III)inamide-GDP = adenosylcob(III)alamin + GMP + H(+). It carries out the reaction alpha-ribazole 5'-phosphate + adenosylcob(III)inamide-GDP = adenosylcob(III)alamin 5'-phosphate + GMP + H(+). The protein operates within cofactor biosynthesis; adenosylcobalamin biosynthesis; adenosylcobalamin from cob(II)yrinate a,c-diamide: step 7/7. Joins adenosylcobinamide-GDP and alpha-ribazole to generate adenosylcobalamin (Ado-cobalamin). Also synthesizes adenosylcobalamin 5'-phosphate from adenosylcobinamide-GDP and alpha-ribazole 5'-phosphate. The sequence is that of Adenosylcobinamide-GDP ribazoletransferase from Geobacillus sp. (strain WCH70).